Here is a 99-residue protein sequence, read N- to C-terminus: Acylphosphatase (99 aa).

In terms of domain architecture, Acylphosphatase-like spans 10–99; the sequence is RLTAFVHGHV…PRGVEGFTER (90 aa). Residues R25 and N43 contribute to the active site.

Belongs to the acylphosphatase family.

It carries out the reaction an acyl phosphate + H2O = a carboxylate + phosphate + H(+). The polypeptide is Acylphosphatase (acyP) (Corynebacterium efficiens (strain DSM 44549 / YS-314 / AJ 12310 / JCM 11189 / NBRC 100395)).